We begin with the raw amino-acid sequence, 121 residues long: Large ribosomal subunit protein uL14 (121 aa).

Belongs to the universal ribosomal protein uL14 family. As to quaternary structure, part of the 50S ribosomal subunit. Forms a cluster with proteins L3 and L19. In the 70S ribosome, L14 and L19 interact and together make contacts with the 16S rRNA in bridges B5 and B8.

Functionally, binds to 23S rRNA. Forms part of two intersubunit bridges in the 70S ribosome. This chain is Large ribosomal subunit protein uL14, found in Bacteroides fragilis (strain ATCC 25285 / DSM 2151 / CCUG 4856 / JCM 11019 / LMG 10263 / NCTC 9343 / Onslow / VPI 2553 / EN-2).